The sequence spans 357 residues: MPPRLCVRCNTSRAMLNRPKTQEQVCRECFFTAFEEEVHQTIVDNKLFKHGERLAVAASGGKDSTVLAHIMSTLNARYNYGLDLFLLSIDEGITGYRDDSLETVKRNEQQYGIPLKVVSYKELYGWTMDEIVSQIGTKNNCTFCGVFRRQALDRGAVLMGANKIATGHNADDVAETVLLNILRGDVPRLGRCANIITGEDSSLPRVKPFKYAYEKEIVLYAYYKKLDYFSTECIYAPFAARGFAREFIKDLEAARPLAIIDVIRSAEDFVFAAASDEKLPQPRTCERCGYISSQPVCKACVLLEGLNRGMPRLGVSRTRGRRGEKAGLHPDVGRGGGGGSSGPAEVASPVEIVYETT.

The disordered stretch occupies residues 314–348 (GVSRTRGRRGEKAGLHPDVGRGGGGGSSGPAEVAS). Residues 321–332 (RRGEKAGLHPDV) show a composition bias toward basic and acidic residues.

Belongs to the TtcA family. CTU1/NCS6/ATPBD3 subfamily.

It localises to the cytoplasm. Its pathway is tRNA modification; 5-methoxycarbonylmethyl-2-thiouridine-tRNA biosynthesis. Its function is as follows. Plays a central role in 2-thiolation of mcm(5)S(2)U at tRNA wobble positions of tRNA(Lys), tRNA(Glu) and tRNA(Gln). Directly binds tRNAs and probably acts by catalyzing adenylation of tRNAs, an intermediate required for 2-thiolation. It is unclear whether it acts as a sulfurtransferase that transfers sulfur from thiocarboxylated URM1 onto the uridine of tRNAs at wobble position. The protein is Cytoplasmic tRNA 2-thiolation protein 1 of Chlamydomonas reinhardtii (Chlamydomonas smithii).